Consider the following 994-residue polypeptide: MSDENNNGRNSAPGGRQPLTLKPRAAGSVSSGTVKQSFSHGRTKTVVVETKRARTHAPAGGNLAAPSAAERRVFEPQKPAGPAQAPRAPQGAGDGLSAEERAARQRAIELARQQEADRRAREERARAEAEAARAAQQKAAQAAAEPPAAPPPAPAAPPAAAAPAAPAAEAAPAPKPAPSPRPVPPSAPAPQAARPAAEAPPRQAGAGQTRTYQPSPDRRDDRPSTTTYRPERPSNRFDTSTFNQRAPRRDDDRGPRPPRRDDDRGPRRDDRPQGARPEGGGTVRYSALAPRPAPGGPRGPGGPRGPGGPRIGAAAPPATPEIQRAARQAPRPGMGVDRRPDEDDRRRDPGKAISRAKGAPNRREGRLTIQAVAGDADGAERMRSLASVRRAREREREKRKGGAQEQARVAREVVIPDVITVGELANRMATRGVEVIKFLMRQGVMLKINDVIDNDTAELVATEFGHTVKRVSEADVEEGFIGAEDVDDHLLPRPPVVAVMGHVDHGKTSLLDALRSTDVVSGEHGGITQHIGAYQVRLADGQRVTFLDTPGHAAFSAMRMRGANVTDIVILVVAADDGVMPQTVEAIQHAKAAGAPIIVAINKIDKPDADPTRVINELLQHEIVVESLGGETQAVEVSATQKMGLDDLIENILLQAEVLDLKANPDRTADGSVIEAKLDKGRGAVATVLVKRGTLKRGDIVVAGSSWGRVRALLNERGEQLQEATPSTPVEILGLDGTPDPGEPFAVVENEARARELTEYRQRVKREKAGAPVASASLADMMAKLADKKVSELPVIIKADVQGSAEAIVGSLDKLATDEVRARIILSGAGAINESDVLLAKGAGAPILGFNVRASKQARDLAEREGVEIRYYAIIYDLIDDIKGVLSGMLAPIQRETFLGNAEVLQAFDITKVGRVAGCRVTEGVVRKGARVRIVREDVVILELGVLKTLKRFKDEVNEVQAGQECGMAFEGFQDIKAGDVIECFNLEEVKRSL.

Composition is skewed to polar residues over residues 1–10 (MSDENNNGRN) and 28–40 (SVSSGTVKQSFSH). The disordered stretch occupies residues 1–405 (MSDENNNGRN…REKRKGGAQE (405 aa)). The segment covering 76-91 (PQKPAGPAQAPRAPQG) has biased composition (low complexity). Residues 98 to 131 (AEERAARQRAIELARQQEADRRAREERARAEAEA) are compositionally biased toward basic and acidic residues. Residues 132 to 146 (ARAAQQKAAQAAAEP) are compositionally biased toward low complexity. Residues 147 to 157 (PAAPPPAPAAP) show a composition bias toward pro residues. The span at 158–172 (PAAAAPAAPAAEAAP) shows a compositional bias: low complexity. Residues 173 to 188 (APKPAPSPRPVPPSAP) are compositionally biased toward pro residues. Residues 189 to 204 (APQAARPAAEAPPRQA) are compositionally biased toward low complexity. Basic and acidic residues-rich tracts occupy residues 216-235 (PDRRDDRPSTTTYRPERPSN) and 247-273 (PRRDDDRGPRPPRRDDDRGPRRDDRPQ). A compositionally biased stretch (gly residues) spans 298–310 (RGPGGPRGPGGPR). 2 stretches are compositionally biased toward basic and acidic residues: residues 336-350 (VDRRPDEDDRRRDPG) and 390-402 (RAREREREKRKGG). Residues 492 to 662 (PRPPVVAVMG…LLQAEVLDLK (171 aa)) enclose the tr-type G domain. The G1 stretch occupies residues 501 to 508 (GHVDHGKT). Residue 501-508 (GHVDHGKT) participates in GTP binding. A G2 region spans residues 526–530 (GITQH). The tract at residues 548-551 (DTPG) is G3. GTP is bound by residues 548–552 (DTPGH) and 602–605 (NKID). A G4 region spans residues 602–605 (NKID). The tract at residues 638 to 640 (SAT) is G5.

This sequence belongs to the TRAFAC class translation factor GTPase superfamily. Classic translation factor GTPase family. IF-2 subfamily.

The protein resides in the cytoplasm. In terms of biological role, one of the essential components for the initiation of protein synthesis. Protects formylmethionyl-tRNA from spontaneous hydrolysis and promotes its binding to the 30S ribosomal subunits. Also involved in the hydrolysis of GTP during the formation of the 70S ribosomal complex. This is Translation initiation factor IF-2 from Phenylobacterium zucineum (strain HLK1).